The primary structure comprises 541 residues: Myrosinase 1 (541 aa).

A signal peptide spans 1–19 (MKLLMLAFVFLLALATCKG). Intrachain disulfides connect C24–C449, C32–C445, and C224–C232. N-linked (GlcNAc...) asparagine glycosylation is present at N33. Q57 contributes to the a beta-D-glucoside binding site. N108 carries an N-linked (GlcNAc...) asparagine glycan. Position 159 (H159) interacts with a beta-D-glucoside. Residue N175 is glycosylated (N-linked (GlcNAc...) asparagine). 204 to 205 (NQ) contributes to the a beta-D-glucoside binding site. A glycan (N-linked (GlcNAc...) asparagine) is linked at N236. Residue Y348 participates in a beta-D-glucoside binding. Residues N356 and N379 are each glycosylated (N-linked (GlcNAc...) asparagine). A beta-D-glucoside is bound by residues E420, W468, 475 to 476 (EF), and F484. E420 functions as the Nucleophile in the catalytic mechanism. Residues N493 and N512 are each glycosylated (N-linked (GlcNAc...) asparagine).

It belongs to the glycosyl hydrolase 1 family. As to quaternary structure, homodimer. Expressed in guard cells, phloem-associated cells and myrosin cells.

It is found in the vacuole. It carries out the reaction a thioglucoside + H2O = a sugar + a thiol.. It catalyses the reaction Hydrolysis of terminal, non-reducing beta-D-glucosyl residues with release of beta-D-glucose.. Degradation of glucosinolates (glucose residue linked by a thioglucoside bound to an amino acid derivative) to glucose, sulfate and any of the products: thiocyanates, isothiocyanates, nitriles, epithionitriles or oxazolidine-2-thiones. These toxic degradation products can deter insect herbivores. Seems to function in abscisic acid (ABA) and methyl jasmonate (MeJA) signaling in guard cells. Functionally redundant with TGG2. Hydrolyzes sinigrin and, with lower efficiency, p-nitrophenyl beta-D-glucoside. The chain is Myrosinase 1 from Arabidopsis thaliana (Mouse-ear cress).